We begin with the raw amino-acid sequence, 178 residues long: ATP-dependent protease subunit HslV (178 aa).

Threonine 7 is an active-site residue. Positions 162, 165, and 168 each coordinate Na(+).

Belongs to the peptidase T1B family. HslV subfamily. A double ring-shaped homohexamer of HslV is capped on each side by a ring-shaped HslU homohexamer. The assembly of the HslU/HslV complex is dependent on binding of ATP.

Its subcellular location is the cytoplasm. The enzyme catalyses ATP-dependent cleavage of peptide bonds with broad specificity.. Its activity is regulated as follows. Allosterically activated by HslU binding. In terms of biological role, protease subunit of a proteasome-like degradation complex believed to be a general protein degrading machinery. This Burkholderia lata (strain ATCC 17760 / DSM 23089 / LMG 22485 / NCIMB 9086 / R18194 / 383) protein is ATP-dependent protease subunit HslV.